A 141-amino-acid chain; its full sequence is HTH-type transcriptional repressor NsrR (141 aa).

One can recognise an HTH rrf2-type domain in the interval 2-129 (QLTSFTDYGL…DNYTLADMVK (128 aa)). A DNA-binding region (H-T-H motif) is located at residues 28–51 (ISQVTEVYGVSRNHMVKIINQLSR). The [2Fe-2S] cluster site is built by C91, C96, and C102.

[2Fe-2S] cluster is required as a cofactor.

Functionally, nitric oxide-sensitive repressor of genes involved in protecting the cell against nitrosative stress. May require iron for activity. The sequence is that of HTH-type transcriptional repressor NsrR from Yersinia pseudotuberculosis serotype O:1b (strain IP 31758).